We begin with the raw amino-acid sequence, 273 residues long: Ribosomal RNA small subunit methyltransferase A (273 aa).

S-adenosyl-L-methionine contacts are provided by N18, L20, G45, E66, D91, and N113.

The protein belongs to the class I-like SAM-binding methyltransferase superfamily. rRNA adenine N(6)-methyltransferase family. RsmA subfamily.

The protein localises to the cytoplasm. The enzyme catalyses adenosine(1518)/adenosine(1519) in 16S rRNA + 4 S-adenosyl-L-methionine = N(6)-dimethyladenosine(1518)/N(6)-dimethyladenosine(1519) in 16S rRNA + 4 S-adenosyl-L-homocysteine + 4 H(+). In terms of biological role, specifically dimethylates two adjacent adenosines (A1518 and A1519) in the loop of a conserved hairpin near the 3'-end of 16S rRNA in the 30S particle. May play a critical role in biogenesis of 30S subunits. The polypeptide is Ribosomal RNA small subunit methyltransferase A (Escherichia coli (strain 55989 / EAEC)).